A 114-amino-acid chain; its full sequence is NADH-quinone oxidoreductase subunit K 2 (114 aa).

3 helical membrane-spanning segments follow: residues 1 to 21 (MIVPFGHVLLLAGALFGLGVF), 29 to 49 (LIMIVLGVEIMLNAASIAFIG), and 62 to 82 (FVLFILAVAATEVSIGLAIIV).

It belongs to the complex I subunit 4L family. As to quaternary structure, NDH-1 is composed of 14 different subunits. Subunits NuoA, H, J, K, L, M, N constitute the membrane sector of the complex.

The protein resides in the cell inner membrane. The catalysed reaction is a quinone + NADH + 5 H(+)(in) = a quinol + NAD(+) + 4 H(+)(out). Its function is as follows. NDH-1 shuttles electrons from NADH, via FMN and iron-sulfur (Fe-S) centers, to quinones in the respiratory chain. The immediate electron acceptor for the enzyme in this species is believed to be ubiquinone. Couples the redox reaction to proton translocation (for every two electrons transferred, four hydrogen ions are translocated across the cytoplasmic membrane), and thus conserves the redox energy in a proton gradient. This Syntrophobacter fumaroxidans (strain DSM 10017 / MPOB) protein is NADH-quinone oxidoreductase subunit K 2.